A 1863-amino-acid chain; its full sequence is Transient receptor potential cation channel subfamily M member 7 (1863 aa).

M1 carries the N-acetylmethionine modification. Residues 1–850 are Cytoplasmic-facing; that stretch reads MSQKSWIEST…ITRKFYAFYH (850 aa). The residue at position 101 (S101) is a Phosphoserine. Low complexity predominate over residues 544-555; it reads NRRSGRNTSSST. Positions 544-574 are disordered; the sequence is NRRSGRNTSSSTPQLRKSHETFGNRADKKEK. Residues 560-573 show a composition bias toward basic and acidic residues; that stretch reads KSHETFGNRADKKE. The chain crosses the membrane as a helical span at residues 851–876; it reads APIVKFWFNTLAYLGFLMLYTFVVLV. Topologically, residues 877 to 882 are extracellular; it reads KMEQLP. A helical transmembrane segment spans residues 883–904; it reads SVQEWIVIAYIFTYAIEKVREV. The Cytoplasmic portion of the chain corresponds to 905–923; sequence FMSEAGKISQKIKVWFSDY. The helical transmembrane segment at 924–943 threads the bilayer; sequence FNVSDTIAIISFFVGFGLRF. Residues 944–956 are Extracellular-facing; it reads GAKWNYINAYDNH. The helical transmembrane segment at 957-980 threads the bilayer; the sequence is VFVAGRLIYCLNIIFWYVRLLDFL. The Cytoplasmic portion of the chain corresponds to 981 to 999; that stretch reads AVNQQAGPYVMMIGKMVAN. A helical transmembrane segment spans residues 1000–1023; the sequence is MFYIVVIMALVLLSFGVPRKAILY. Residues 1024 to 1025 lie on the Extracellular side of the membrane; the sequence is PH. Residues 1026 to 1066 constitute an intramembrane region (pore-forming); it reads EEPSWSLAKDIVFHPYWMIFGEVYAYEIDVCANDSTLPTIC. The Extracellular portion of the chain corresponds to 1067–1069; that stretch reads GPG. Residues 1070-1098 traverse the membrane as a helical segment; that stretch reads TWLTPFLQAVYLFVQYIIMVNLLIAFFNN. Over 1099–1863 the chain is Cytoplasmic; that stretch reads VYLQVKAISN…EATNSVRLML (765 aa). S-palmitoyl cysteine attachment occurs at residues C1143, C1144, and C1146. T1163 carries the post-translational modification Phosphothreonine. S1191, S1193, S1224, S1255, and S1258 each carry phosphoserine. Positions 1198–1250 form a coiled coil; the sequence is RVTFERVEQMSIQIKEVGDRVNYIKRSLQSLDSQIGHLQDLSALTVDTLKTLT. Position 1265 is a phosphothreonine (T1265). A phosphoserine mark is found at S1300, S1357, S1360, S1385, S1386, S1389, S1394, S1395, and S1403. Positions 1380-1418 are disordered; sequence NQKLGSSPNSSPHMSSPPTKFSVSTPSQPSCKSHLESTT. Residues 1385–1397 are compositionally biased toward low complexity; the sequence is SSPNSSPHMSSPP. Polar residues predominate over residues 1398-1410; the sequence is TKFSVSTPSQPSC. Position 1404 is a phosphothreonine (T1404). A phosphoserine mark is found at S1406 and S1445. The residue at position 1454 (T1454) is a Phosphothreonine. Position 1455 is a phosphoserine (S1455). Phosphothreonine is present on residues T1466 and T1470. 6 positions are modified to phosphoserine: S1491, S1498, S1502, S1511, S1525, and S1531. The segment at 1498–1539 is disordered; sequence SRRASTEDSPEVDSKAALLPDWLRDRPSNREMPSEGGTLNGL. Residues 1519 to 1530 show a composition bias toward basic and acidic residues; that stretch reads WLRDRPSNREMP. Residue T1535 is modified to Phosphothreonine. S1541 is subject to Phosphoserine. T1549 bears the Phosphothreonine mark. S1565 and S1567 each carry phosphoserine. Residue T1581 is modified to Phosphothreonine. The region spanning 1592 to 1822 is the Alpha-type protein kinase domain; sequence ILNNSMSSWS…CCRKLKLPDL (231 aa). A phosphoserine mark is found at S1596 and S1613. ADP is bound by residues G1619, G1620, L1621, R1622, and K1646. A Phosphoserine modification is found at S1658. T1683 bears the Phosphothreonine mark. Residues E1718, E1719, and M1721 each contribute to the ADP site. H1751 serves as a coordination point for Zn(2+). D1765 (proton acceptor) is an active-site residue. D1775 contacts ADP. S1777 is modified (phosphoserine). Positions 1808, 1810, and 1814 each coordinate Zn(2+). Residue T1828 is modified to Phosphothreonine. The segment at 1838–1863 is disordered; it reads ESSDLNLQSGNSTKESEATNSVRLML. Polar residues predominate over residues 1841-1863; sequence DLNLQSGNSTKESEATNSVRLML. Phosphoserine occurs at positions 1846, 1849, and 1858.

In the C-terminal section; belongs to the protein kinase superfamily. Alpha-type protein kinase family. ALPK subfamily. This sequence in the N-terminal section; belongs to the transient receptor (TC 1.A.4) family. LTrpC subfamily. TRPM7 sub-subfamily. Homodimer. Homotetramer. Forms heteromers with TRPM6; heteromeric channels are functionally different from the homomeric channels. Interacts with PLCB1. Zn(2+) is required as a cofactor. Post-translationally, palmitoylated; palmitoylation at Cys-1143, Cys-1144 and Cys-1146 promotes TRPM7 trafficking from the Golgi to the surface membrane. In terms of processing, autophosphorylated; autophosphorylation regulates TRPM7 kinase activity towards its substrates. The C-terminal kinase domain can be cleaved from the channel segment in a cell-type-specific fashion. TRPM7 is cleaved by caspase-8, dissociating the kinase from the ion-conducting pore. The cleaved kinase fragments (M7CKs) can translocate to the cell nucleus and binds chromatin-remodeling complex proteins in a Zn(2+)-dependent manner to ultimately phosphorylate specific Ser/Thr residues of histones. As to expression, found to be expressed in brain and skeletal muscle, with stronger signals in kidney, heart, liver and spleen.

Its subcellular location is the cell membrane. It localises to the cytoplasmic vesicle membrane. The protein localises to the nucleus. The catalysed reaction is L-seryl-[protein] + ATP = O-phospho-L-seryl-[protein] + ADP + H(+). It carries out the reaction L-threonyl-[protein] + ATP = O-phospho-L-threonyl-[protein] + ADP + H(+). It catalyses the reaction Mg(2+)(in) = Mg(2+)(out). The enzyme catalyses Ca(2+)(in) = Ca(2+)(out). The catalysed reaction is Zn(2+)(in) = Zn(2+)(out). Channel displays constitutive activity. Channel activity is negatively regulated by cytosolic Mg(2+), Mg-ATP and low intracellular pH. Resting free cytosolic Mg(2+) and Mg-ATP concentrations seem to be sufficient to block native TRPM7 channel activity. TRPM7 channel activity is highly dependent on membrane levels of phosphatidylinositol 4,5 bisphosphate (PIP2). PIP2 hydrolysis negatively regulates TRPM7 channel activity. TRPM7 kinase activity does not affect channel activity. The kinase activity is controlled through the autophosphorylation of a serine/threonine-rich region located N-terminal to the catalytic domain. Bifunctional protein that combines an ion channel with an intrinsic kinase domain, enabling it to modulate cellular functions either by conducting ions through the pore or by phosphorylating downstream proteins via its kinase domain. The channel is highly permeable to divalent cations, specifically calcium (Ca2+), magnesium (Mg2+) and zinc (Zn2+) and mediates their influx. Controls a wide range of biological processes such as Ca2(+), Mg(2+) and Zn(2+) homeostasis, vesicular Zn(2+) release channel and intracellular Ca(2+) signaling, embryonic development, immune responses, cell motility, proliferation and differentiation. The C-terminal alpha-kinase domain autophosphorylates cytoplasmic residues of TRPM7. TRPM7 phosphorylates SMAD2, suggesting that TRPM7 kinase may play a role in activating SMAD signaling pathways. In vitro, TRPM7 kinase phosphorylates ANXA1 (annexin A1), myosin II isoforms and a variety of proteins with diverse cellular functions. Functionally, the cleaved channel exhibits substantially higher current and potentiates Fas receptor signaling. In terms of biological role, the C-terminal kinase domain can be cleaved from the channel segment in a cell-type-specific fashion. In immune cells, the TRPM7 kinase domain is clipped from the channel domain by caspases in response to Fas-receptor stimulation. The cleaved kinase fragments can translocate to the nucleus, and bind chromatin-remodeling complex proteins in a Zn(2+)-dependent manner to ultimately phosphorylate specific Ser/Thr residues of histones known to be functionally important for cell differentiation and embryonic development. In Mus musculus (Mouse), this protein is Transient receptor potential cation channel subfamily M member 7 (Trpm7).